A 54-amino-acid chain; its full sequence is Apelin receptor early endogenous ligand (54 aa).

Positions 1–23 (MRFQPLFWVFFIFAMSLLFISEQ) are cleaved as a signal peptide.

This sequence belongs to the Elabela/Toddler family. Interacts with APLNR. As to expression, expressed in the placenta. Expressed in syncytiotrophoblasts of the placenta labyrinth at 10.5 dpc. Expressed in placental chorionic trophoblasts (at protein level). Expressed in a small population of epiblast cells in the distal half of the embryo at 7 dpc. Expressed in newly formed definitive endoderm cells in the proximal half of the embryo, while it is not present in extra-embryonic endoderm at 7.5 dpc. This expression pattern then changes to the ventral aspect of the developing foregut pocket and the entire hindgut pocket at 8.5 dpc, before becoming restricted to the foregut overlying the heart and the posterior-most hindgut. Not detected in endothelial precursor cells of the yolk sac at 8 dpc. Expressed in extraembryonic tissues as well as in the chorion at 8.25 dpc. Expressed in endometrial stroma of the uterus of pregnant mice at 8.5 dpc. Expressed in the developing heart, caudal neural tube and trophobasts at 9 dpc. Expressed in the chorionic plate of the chorioallantoic placenta at 9 dpc. Expressed in the posterior half of the ventral neural tube at 9.25 dpc. Expressed in trophoblast cells at the periphery of the placenta at 9.5 dpc. Expressed in collecting ducts of the kidney of pregnant mice at 10.5 dpc. Expressed in the epicardium of the developing heart at 11.5 dpc. Expressed weakly in the adult heart. Expressed in endothelial cells and fibroblasts and weakly in cardiomyocytes.

The protein localises to the secreted. Its subcellular location is the extracellular space. In terms of biological role, peptide hormone that functions as endogenous ligand for the G-protein-coupled apelin receptor (APLNR/APJ), that plays a role in the regulation of normal cardiovascular function and fluid homeostasis. Functions as a balanced agonist activating both G(i) protein pathway and beta-arrestin pathway of APLNR. Downstream G proteins activation, apelin can inhibit cAMP production and activate key intracellular effectors such as ERKs. On the other hand, APLNR activation induces beta-arrestin recruitment to the membrane leading to desensitization and internalization of the receptor. Required for mesendodermal differentiation, blood vessels formation and heart morphogenesis during early development and for adult cardiovascular homeostasis. Acts as a motogen by promoting mesendodermal cell migration during gastrulation by binding and activating APLNR. Acts as an early embryonic regulator of cellular movement with a role in migration and development of cardiac progenitor cells. May act as a chemoattractant for the activation of angioblast migration toward the embryonic midline, i.e. the position of the future vessel formation, during vasculogenesis. Positively regulates sinus venosus (SV)-derived endothelial cells migration into the developing heart to promote coronary blood vessel sprouting. Plays a role in placental vascular development; promotes placental trophoblast invasion and spiral artery remodeling in the uterus. Involved in the regulation of maternal cardiovascular homeostasis to prevent gestational hypertension and for potent cardioprotective functions during heart failure. Mediates myocardial contractility in an ERK1/2-dependent manner. This chain is Apelin receptor early endogenous ligand, found in Mus musculus (Mouse).